The sequence spans 940 residues: Phosphoenolpyruvate carboxylase (940 aa).

Catalysis depends on residues histidine 138 and lysine 603.

The protein belongs to the PEPCase type 1 family. Mg(2+) is required as a cofactor.

It catalyses the reaction oxaloacetate + phosphate = phosphoenolpyruvate + hydrogencarbonate. Forms oxaloacetate, a four-carbon dicarboxylic acid source for the tricarboxylic acid cycle. This is Phosphoenolpyruvate carboxylase from Streptococcus thermophilus (strain ATCC BAA-491 / LMD-9).